We begin with the raw amino-acid sequence, 294 residues long: Putative glucose-6-phosphate 1-epimerase (294 aa).

2 residues coordinate substrate: Arg74 and Arg99. The active site involves His164. Residue Asp208 participates in substrate binding. Residue Glu267 is part of the active site.

The protein belongs to the glucose-6-phosphate 1-epimerase family. Monomer in solution.

The catalysed reaction is alpha-D-glucose 6-phosphate = beta-D-glucose 6-phosphate. This Escherichia coli (strain K12) protein is Putative glucose-6-phosphate 1-epimerase (yeaD).